Reading from the N-terminus, the 314-residue chain is DNA-directed RNA polymerase subunit alpha (314 aa).

The segment at 1–228 (MIEIEKPRIE…EHLNIFVSLT (228 aa)) is alpha N-terminal domain (alpha-NTD). Positions 245 to 314 (KEKVLEMSIE…DLGLGLRKED (70 aa)) are alpha C-terminal domain (alpha-CTD).

Belongs to the RNA polymerase alpha chain family. Homodimer. The RNAP catalytic core consists of 2 alpha, 1 beta, 1 beta' and 1 omega subunit. When a sigma factor is associated with the core the holoenzyme is formed, which can initiate transcription.

It catalyses the reaction RNA(n) + a ribonucleoside 5'-triphosphate = RNA(n+1) + diphosphate. In terms of biological role, DNA-dependent RNA polymerase catalyzes the transcription of DNA into RNA using the four ribonucleoside triphosphates as substrates. The protein is DNA-directed RNA polymerase subunit alpha of Staphylococcus epidermidis (strain ATCC 35984 / DSM 28319 / BCRC 17069 / CCUG 31568 / BM 3577 / RP62A).